A 256-amino-acid chain; its full sequence is Ubiquinone/menaquinone biosynthesis C-methyltransferase UbiE (256 aa).

S-adenosyl-L-methionine contacts are provided by Thr78 and Asp99.

Belongs to the class I-like SAM-binding methyltransferase superfamily. MenG/UbiE family.

It carries out the reaction a 2-demethylmenaquinol + S-adenosyl-L-methionine = a menaquinol + S-adenosyl-L-homocysteine + H(+). The catalysed reaction is a 2-methoxy-6-(all-trans-polyprenyl)benzene-1,4-diol + S-adenosyl-L-methionine = a 5-methoxy-2-methyl-3-(all-trans-polyprenyl)benzene-1,4-diol + S-adenosyl-L-homocysteine + H(+). Its pathway is quinol/quinone metabolism; menaquinone biosynthesis; menaquinol from 1,4-dihydroxy-2-naphthoate: step 2/2. It functions in the pathway cofactor biosynthesis; ubiquinone biosynthesis. Methyltransferase required for the conversion of demethylmenaquinol (DMKH2) to menaquinol (MKH2) and the conversion of 2-polyprenyl-6-methoxy-1,4-benzoquinol (DDMQH2) to 2-polyprenyl-3-methyl-6-methoxy-1,4-benzoquinol (DMQH2). This Geobacter sulfurreducens (strain ATCC 51573 / DSM 12127 / PCA) protein is Ubiquinone/menaquinone biosynthesis C-methyltransferase UbiE.